We begin with the raw amino-acid sequence, 391 residues long: ATPase GET3C (391 aa).

The transit peptide at 1 to 50 (MAALLLLNRVSRSTSSISLHRVAGTLGFNSFNAQIHGDRISGTLFRVRSL) directs the protein to the mitochondrion. Residue 77–84 (KGGVGKTS) participates in ATP binding. Residue Asp-106 is part of the active site. Asn-328 provides a ligand contact to ATP.

This sequence belongs to the arsA ATPase family.

It localises to the mitochondrion matrix. It carries out the reaction ATP + H2O = ADP + phosphate + H(+). The protein is ATPase GET3C of Arabidopsis thaliana (Mouse-ear cress).